The sequence spans 160 residues: Photosystem I reaction center subunit XI (160 aa).

The next 2 membrane-spanning stretches (helical) occupy residues 84–104 (LIPA…YGLV) and 125–145 (FAAG…FLLE).

Belongs to the PsaL family.

The protein resides in the cellular thylakoid membrane. The chain is Photosystem I reaction center subunit XI from Microcystis aeruginosa (strain NIES-843 / IAM M-2473).